The chain runs to 130 residues: Small ribosomal subunit protein uS9 (130 aa).

Belongs to the universal ribosomal protein uS9 family.

The sequence is that of Small ribosomal subunit protein uS9 from Burkholderia vietnamiensis (strain G4 / LMG 22486) (Burkholderia cepacia (strain R1808)).